We begin with the raw amino-acid sequence, 241 residues long: Pyridoxal phosphate phosphatase PHOSPHO2 (241 aa).

Asp-8 (nucleophile) is an active-site residue. The Mg(2+) site is built by Asp-8 and Asp-10. The active-site Proton donor is Asp-10. Residues Asp-19 and Asp-99 each contribute to the substrate site. Asp-179 lines the Mg(2+) pocket.

It belongs to the HAD-like hydrolase superfamily. PHOSPHO family. Mg(2+) is required as a cofactor.

The enzyme catalyses pyridoxal 5'-phosphate + H2O = pyridoxal + phosphate. In terms of biological role, phosphatase that has high activity toward pyridoxal 5'-phosphate (PLP). Also active at much lower level toward pyrophosphate, phosphoethanolamine (PEA), phosphocholine (PCho), phospho-l-tyrosine, fructose-6-phosphate, p-nitrophenyl phosphate, and h-glycerophosphate. The sequence is that of Pyridoxal phosphate phosphatase PHOSPHO2 (Phospho2) from Rattus norvegicus (Rat).